The chain runs to 807 residues: AP-5 complex subunit zeta-1 (807 aa).

As to quaternary structure, probably part of the adaptor protein complex 5 (AP-5) a tetramer composed of AP5B1, AP5M1, AP5S1 and AP5Z1. Interacts with ZFYVE26 and SPG11.

The protein localises to the cytoplasm. The protein resides in the nucleus. Its function is as follows. As part of AP-5, a probable fifth adaptor protein complex it may be involved in endosomal transport. The chain is AP-5 complex subunit zeta-1 (Ap5z1) from Mus musculus (Mouse).